The primary structure comprises 402 residues: MESRVLSRATTLSSLPTLNKLHRLPLANASLPSVKSFGSVSDGGNLVWGRQLRPELCSPVLKKGASLLRPCPATAGGNDSAGEEKVAPVGFFSRYPALTTGFFFFTWYFLNVIFNILNKKIYNYFPYPYFVSVIHLAVGVVYCLVSWTVGLPKRAPIDGNLLKLLIPVAVCHALGHVTSNVSFAAVAVSFTHTVKALEPFFNAAASQFILGQSIPITLWLSLAPVVIGVSMASLTELSFNWLGFISAMISNISFTYRSIYSKKAMTDMDSTNIYAYISIIALIVCIPPALIIEGPTLLKTGFNDAIAKVGLVKFVSDLFWVGMFYHLYNQVATNTLERVAPLTHAVGNVLKRVFVIGFSIIIFGNKISTQTGIGTGIAIAGVALYSFIKAQIEEEKRQAKAA.

A chloroplast-targeting transit peptide spans 1-72; the sequence is MESRVLSRAT…KGASLLRPCP (72 aa). Topologically, residues 73–96 are chloroplast intermembrane; that stretch reads ATAGGNDSAGEEKVAPVGFFSRYP. Residues 97 to 117 traverse the membrane as a helical segment; that stretch reads ALTTGFFFFTWYFLNVIFNIL. Residues 118 to 129 lie on the Lumenal side of the membrane; sequence NKKIYNYFPYPY. A helical membrane pass occupies residues 130–150; that stretch reads FVSVIHLAVGVVYCLVSWTVG. Residues 151-207 lie on the Chloroplast intermembrane side of the membrane; that stretch reads LPKRAPIDGNLLKLLIPVAVCHALGHVTSNVSFAAVAVSFTHTVKALEPFFNAAASQ. The helical transmembrane segment at 208 to 228 threads the bilayer; sequence FILGQSIPITLWLSLAPVVIG. The Lumenal portion of the chain corresponds to 229-272; the sequence is VSMASLTELSFNWLGFISAMISNISFTYRSIYSKKAMTDMDSTN. The helical transmembrane segment at 273-292 threads the bilayer; that stretch reads IYAYISIIALIVCIPPALII. Residues 293–370 lie on the Chloroplast intermembrane side of the membrane; it reads EGPTLLKTGF…IIFGNKISTQ (78 aa). The chain crosses the membrane as a helical span at residues 371–391; sequence TGIGTGIAIAGVALYSFIKAQ. Residues 392–402 are Lumenal-facing; that stretch reads IEEEKRQAKAA.

This sequence belongs to the TPT transporter family. TPT (TC 2.A.7.9) subfamily. As to quaternary structure, homodimer.

The protein localises to the plastid. The protein resides in the chloroplast membrane. Functionally, mediates the export of fixed carbons from the chloroplasts into the cytosol in the form of triose phosphates. This chain is Triose phosphate/phosphate translocator, chloroplastic, found in Pisum sativum (Garden pea).